The primary structure comprises 393 residues: Digeranylgeranylglycerophospholipid reductase (393 aa).

A13, D32, C43, A44, G46, R95, V119, D274, and G286 together coordinate FAD. R327 and G363 together coordinate a 2,3-bis-O-(geranylgeranyl)-sn-glycerol 1-phospholipid.

Belongs to the geranylgeranyl reductase family. DGGGPL reductase subfamily. It depends on FAD as a cofactor.

It carries out the reaction a 2,3-bis-O-phytanyl-sn-glycerol 1-phospholipid + 8 A = a 2,3-bis-O-(geranylgeranyl)-sn-glycerol 1-phospholipid + 8 AH2. The enzyme catalyses 2,3-bis-O-(phytanyl)-sn-glycerol 1-phosphate + 8 A = 2,3-bis-O-(geranylgeranyl)-sn-glycerol 1-phosphate + 8 AH2. The catalysed reaction is CDP-2,3-bis-O-(geranylgeranyl)-sn-glycerol + 8 AH2 = CDP-2,3-bis-O-(phytanyl)-sn-glycerol + 8 A. It catalyses the reaction archaetidylserine + 8 AH2 = 2,3-bis-O-phytanyl-sn-glycero-3-phospho-L-serine + 8 A. Its pathway is membrane lipid metabolism; glycerophospholipid metabolism. In terms of biological role, is involved in the reduction of 2,3-digeranylgeranylglycerophospholipids (unsaturated archaeols) into 2,3-diphytanylglycerophospholipids (saturated archaeols) in the biosynthesis of archaeal membrane lipids. Catalyzes the formation of archaetidic acid (2,3-di-O-phytanyl-sn-glyceryl phosphate) from 2,3-di-O-geranylgeranylglyceryl phosphate (DGGGP) via the hydrogenation of each double bond of the isoprenoid chains. Is also probably able to reduce double bonds of geranyl groups in CDP-2,3-bis-O-(geranylgeranyl)-sn-glycerol and archaetidylserine, thus acting at various stages in the biosynthesis of archaeal membrane lipids. The polypeptide is Digeranylgeranylglycerophospholipid reductase (Pyrococcus horikoshii (strain ATCC 700860 / DSM 12428 / JCM 9974 / NBRC 100139 / OT-3)).